Reading from the N-terminus, the 224-residue chain is UPF0758 protein PSPPH_0210 (224 aa).

One can recognise an MPN domain in the interval 102 to 224 (ALENPTQVRN…PLSMVERGLM (123 aa)). Residues His-173, His-175, and Asp-186 each contribute to the Zn(2+) site. Positions 173 to 186 (HNHPSGITTPSRSD) match the JAMM motif motif.

The protein belongs to the UPF0758 family.

In Pseudomonas savastanoi pv. phaseolicola (strain 1448A / Race 6) (Pseudomonas syringae pv. phaseolicola (strain 1448A / Race 6)), this protein is UPF0758 protein PSPPH_0210.